Reading from the N-terminus, the 847-residue chain is Aryl hydrocarbon receptor (847 aa).

Residues 1 to 39 (MNGGGANITYASRKRRKPVQKTVKPIPAEGIKSNPSKRH) are disordered. 2 short sequence motifs (nuclear localization signal) span residues 13-16 (RKRR) and 37-42 (KRHRDR). Residues 27–80 (PAEGIKSNPSKRHRDRLNTELDRLASLLPFPQDVINKLDKLSVLRLSVSYLRAK) enclose the bHLH domain. The segment at 38–66 (RHRDRLNTELDRLASLLPFPQDVINKLDK) is DNA-binding. 3 required for maintaining the overall integrity of the AHR:ARNT heterodimer and its transcriptional activity regions span residues 50-82 (LASL…AKSF), 117-125 (LLQALNGFV), and 264-266 (FAI). The Nuclear export signal signature appears at 64–72 (LDKLSVLRL). The PAS 1 domain maps to 120 to 173 (ALNGFVLVVTVDALVFYASSTIQDYLGFQQSDVIHQSVYELIHTEDRAEFQRQL). Residues 281–336 (KNFIFRTKHKLDFTPTGCDAKGQIVLGYTEAELCMRGSGYQFIHAADMLYCAESHI) form the PAS 2 domain. The region spanning 346–384 (LAVFRLLTKDNRWAWVQSNARFIYKNGRPDFIIATQRPL) is the PAC domain. Disordered regions lie at residues 430-452 (KSGT…VHPS) and 825-847 (HLPP…GRLL). Polar residues predominate over residues 440-452 (TKPTPSKDSVHPS).

Homodimer. Heterodimer; efficient DNA binding requires dimerization with another bHLH protein. Binds MYBBP1A. Interacts with coactivators including SRC-1, RIP140 and NOCA7, and with the corepressor SMRT. Interacts with NEDD8 and IVNS1ABP. Interacts with BMAL1. Interacts with HSP90AB1. Interacts with ARNT; the heterodimer ARNT:AHR binds to core DNA sequence 5'-TGCGTG-3' within the dioxin response element (DRE) of target gene promoters and activates their transcription. Interacts with TIPARP; leading to mono-ADP-ribosylation of AHR and subsequent inhibition of AHR. Post-translationally, mono-ADP-ribosylated, leading to inhibit transcription activator activity of AHR.

It localises to the cytoplasm. The protein resides in the nucleus. Its function is as follows. Ligand-activated transcription factor that enables cells to adapt to changing conditions by sensing compounds from the environment, diet, microbiome and cellular metabolism, and which plays important roles in development, immunity and cancer. Upon ligand binding, translocates into the nucleus, where it heterodimerizes with ARNT and induces transcription by binding to xenobiotic response elements (XRE). Regulates a variety of biological processes, including angiogenesis, hematopoiesis, drug and lipid metabolism, cell motility and immune modulation. Xenobiotics can act as ligands: upon xenobiotic-binding, activates the expression of multiple phase I and II xenobiotic chemical metabolizing enzyme genes (such as the CYP1A1 gene). Mediates biochemical and toxic effects of halogenated aromatic hydrocarbons. Next to xenobiotics, natural ligands derived from plants, microbiota, and endogenous metabolism are potent AHR agonists. Tryptophan (Trp) derivatives constitute an important class of endogenous AHR ligands. Acts as a negative regulator of anti-tumor immunity: indoles and kynurenic acid generated by Trp catabolism act as ligand and activate AHR, thereby promoting AHR-driven cancer cell motility and suppressing adaptive immunity. Regulates the circadian clock by inhibiting the basal and circadian expression of the core circadian component PER1. Inhibits PER1 by repressing the CLOCK-BMAL1 heterodimer mediated transcriptional activation of PER1. The heterodimer ARNT:AHR binds to core DNA sequence 5'-TGCGTG-3' within the dioxin response element (DRE) of target gene promoters and activates their transcription. In Oryctolagus cuniculus (Rabbit), this protein is Aryl hydrocarbon receptor (AHR).